The sequence spans 163 residues: Endoribonuclease YbeY (163 aa).

Zn(2+) contacts are provided by His-121, His-125, and His-131.

Belongs to the endoribonuclease YbeY family. Zn(2+) serves as cofactor.

It is found in the cytoplasm. Functionally, single strand-specific metallo-endoribonuclease involved in late-stage 70S ribosome quality control and in maturation of the 3' terminus of the 16S rRNA. This is Endoribonuclease YbeY from Synechococcus sp. (strain JA-2-3B'a(2-13)) (Cyanobacteria bacterium Yellowstone B-Prime).